The chain runs to 429 residues: Glucose-1-phosphate adenylyltransferase (429 aa).

Alpha-D-glucose 1-phosphate contacts are provided by residues tyrosine 116, glycine 181, 196–197 (EK), and serine 214.

It belongs to the bacterial/plant glucose-1-phosphate adenylyltransferase family. As to quaternary structure, homotetramer.

It carries out the reaction alpha-D-glucose 1-phosphate + ATP + H(+) = ADP-alpha-D-glucose + diphosphate. The protein operates within glycan biosynthesis; glycogen biosynthesis. Its function is as follows. Involved in the biosynthesis of ADP-glucose, a building block required for the elongation reactions to produce glycogen. Catalyzes the reaction between ATP and alpha-D-glucose 1-phosphate (G1P) to produce pyrophosphate and ADP-Glc. This is Glucose-1-phosphate adenylyltransferase from Paramagnetospirillum magneticum (strain ATCC 700264 / AMB-1) (Magnetospirillum magneticum).